Here is a 570-residue protein sequence, read N- to C-terminus: Spastin (570 aa).

The Cytoplasmic portion of the chain corresponds to 1–35 (MNSGHKARLRGGRACGPVSDGSARGNRLLFYTRSL). Positions 36-52 (SRVPEWLLRVLLLLLRW) form an intramembrane region, helical. Over 53–570 (LFQPIRRAMA…NREYGDTTGV (518 aa)) the chain is Cytoplasmic. Residues 83-158 (YHKQAFEFIS…SMAEDRLKLL (76 aa)) form the MIT domain. The interval 186–269 (APASGAVSKK…SPQRKRDMKN (84 aa)) is disordered. Composition is skewed to polar residues over residues 199–208 (LTITNQTSLR), 216–242 (TPNA…NQKG), and 251–261 (VKASTTATASP). Residue 335-342 (GPPGNGKT) participates in ATP binding.

This sequence belongs to the AAA ATPase family. Spastin subfamily. Homohexamer. The homohexamer is stabilized by ATP-binding. The homohexamer may adopt a ring conformation through which microtubules pass prior to being severed. Interacts with microtubules.

It is found in the membrane. It localises to the cytoplasm. Its subcellular location is the cytoskeleton. The protein resides in the microtubule organizing center. The protein localises to the centrosome. It is found in the perinuclear region. It localises to the nucleus. The enzyme catalyses n ATP + n H2O + a microtubule = n ADP + n phosphate + (n+1) alpha/beta tubulin heterodimers.. Its function is as follows. ATP-dependent microtubule severing protein that specifically recognizes and cuts microtubules that are polyglutamylated. Preferentially recognizes and acts on microtubules decorated with short polyglutamate tails: severing activity increases as the number of glutamates per tubulin rises from one to eight, but decreases beyond this glutamylation threshold. Microtubule severing promotes reorganization of cellular microtubule arrays and the release of microtubules from the centrosome following nucleation. Required for membrane traffic from the endoplasmic reticulum (ER) to the Golgi and for completion of the abscission stage of cytokinesis. Also plays a role in axon growth and the formation of axonal branches. The chain is Spastin from Danio rerio (Zebrafish).